Reading from the N-terminus, the 243-residue chain is 2-C-methyl-D-erythritol 4-phosphate cytidylyltransferase (243 aa).

This sequence belongs to the IspD/TarI cytidylyltransferase family. IspD subfamily.

It carries out the reaction 2-C-methyl-D-erythritol 4-phosphate + CTP + H(+) = 4-CDP-2-C-methyl-D-erythritol + diphosphate. Its pathway is isoprenoid biosynthesis; isopentenyl diphosphate biosynthesis via DXP pathway; isopentenyl diphosphate from 1-deoxy-D-xylulose 5-phosphate: step 2/6. Catalyzes the formation of 4-diphosphocytidyl-2-C-methyl-D-erythritol from CTP and 2-C-methyl-D-erythritol 4-phosphate (MEP). This is 2-C-methyl-D-erythritol 4-phosphate cytidylyltransferase from Rhodopirellula baltica (strain DSM 10527 / NCIMB 13988 / SH1).